Here is a 303-residue protein sequence, read N- to C-terminus: Serine/threonine-protein phosphatase PP-X homolog 1 (303 aa).

Residues Asp51, His53, Asp79, and Asn111 each contribute to the Mn(2+) site. His112 serves as the catalytic Proton donor. Residues His161 and His235 each contribute to the Mn(2+) site.

Belongs to the PPP phosphatase family. PP-4 (PP-X) subfamily. Requires Mn(2+) as cofactor.

It catalyses the reaction O-phospho-L-seryl-[protein] + H2O = L-seryl-[protein] + phosphate. The enzyme catalyses O-phospho-L-threonyl-[protein] + H2O = L-threonyl-[protein] + phosphate. In Paramecium tetraurelia, this protein is Serine/threonine-protein phosphatase PP-X homolog 1 (Ppx1).